Here is a 135-residue protein sequence, read N- to C-terminus: Cytochrome b5, seed isoform (135 aa).

The 77-residue stretch at 5–81 folds into the Cytochrome b5 heme-binding domain; that stretch reads SKVFTLAEVS…LDEYYVGDID (77 aa). Heme-binding residues include His-40 and His-64. The chain crosses the membrane as a helical span at residues 107-127; it reads FIVKLLQFLVPLIILGVAFGV.

This sequence belongs to the cytochrome b5 family. Specifically expressed in developing seeds.

It localises to the endoplasmic reticulum membrane. Its subcellular location is the microsome membrane. Cytochrome b5 is a membrane bound hemoprotein which function as an electron carrier for several membrane bound oxygenases. May play a key role in the modification by desaturation of fatty acids in the endoplasmic reticulum, which in the developing seed is utilized for membrane synthesis and in the developmentally regulated production of large amounts of storage lipids. This is Cytochrome b5, seed isoform from Nicotiana tabacum (Common tobacco).